The sequence spans 883 residues: Integrator complex subunit 6-B (883 aa).

Residues 3–227 (ILLFLLDTSA…QCLESLVQKI (225 aa)) enclose the VWFA domain. The short motif at 626–633 (MMIDEADE) is the Inhibitory loop element.

This sequence belongs to the Integrator subunit 6 family. In terms of assembly, component of the Integrator complex, composed of core subunits INTS1, INTS2, INTS3, INTS4, INTS5, INTS6, INTS7, INTS8, INTS9/RC74, INTS10, INTS11/CPSF3L, INTS12, INTS13, INTS14 and INTS15. The core complex associates with protein phosphatase 2A subunits PPP2CA and PPP2R1A, to form the Integrator-PP2A (INTAC) complex.

Its subcellular location is the nucleus. It is found in the chromosome. Component of the integrator complex, a multiprotein complex that terminates RNA polymerase II (Pol II) transcription in the promoter-proximal region of genes. The integrator complex provides a quality checkpoint during transcription elongation by driving premature transcription termination of transcripts that are unfavorably configured for transcriptional elongation: the complex terminates transcription by (1) catalyzing dephosphorylation of the C-terminal domain (CTD) of Pol II subunit POLR2A/RPB1 and SUPT5H/SPT5, (2) degrading the exiting nascent RNA transcript via endonuclease activity and (3) promoting the release of Pol II from bound DNA. The integrator complex is also involved in terminating the synthesis of non-coding Pol II transcripts, such as enhancer RNAs (eRNAs), small nuclear RNAs (snRNAs), telomerase RNAs and long non-coding RNAs (lncRNAs). Within the integrator complex, INTS6 acts as a molecular adapter that promotes assembly of protein phosphatase 2A (PP2A) subunits to the integrator core complex, promoting recruitment of PP2A to transcription pause-release checkpoint. In Xenopus laevis (African clawed frog), this protein is Integrator complex subunit 6-B (ints6-b).